Reading from the N-terminus, the 104-residue chain is MAFRPLHDRILVRRVESEEKTKGGIIIPDTAKEKPQEGEVLAVGPGARGEQGQIQPLDVKVGDRILFGKWSGTEIKIDGEDLLIMKESDVMGIIEARAAEKIAA.

Belongs to the GroES chaperonin family. Heptamer of 7 subunits arranged in a ring. Interacts with the chaperonin GroEL.

The protein resides in the cytoplasm. Together with the chaperonin GroEL, plays an essential role in assisting protein folding. The GroEL-GroES system forms a nano-cage that allows encapsulation of the non-native substrate proteins and provides a physical environment optimized to promote and accelerate protein folding. GroES binds to the apical surface of the GroEL ring, thereby capping the opening of the GroEL channel. The chain is Co-chaperonin GroES 5 from Rhizobium meliloti (strain 1021) (Ensifer meliloti).